The following is a 245-amino-acid chain: Ribonuclease 3 (245 aa).

The RNase III domain occupies 19–148; it reads FKVFQEKIGI…FIGALYLDQG (130 aa). Residue glutamate 61 coordinates Mg(2+). The active site involves aspartate 65. The Mg(2+) site is built by aspartate 134 and glutamate 137. The active site involves glutamate 137. A DRBM domain is found at 174–243; that stretch reads DYKSQLQELI…AAEALKKLKE (70 aa).

Belongs to the ribonuclease III family. In terms of assembly, homodimer. Requires Mg(2+) as cofactor.

Its subcellular location is the cytoplasm. It carries out the reaction Endonucleolytic cleavage to 5'-phosphomonoester.. Its function is as follows. Digests double-stranded RNA. Involved in the processing of primary rRNA transcript to yield the immediate precursors to the large and small rRNAs (23S and 16S). Processes some mRNAs, and tRNAs when they are encoded in the rRNA operon. Processes pre-crRNA and tracrRNA of type II CRISPR loci if present in the organism. This Bacillus cereus (strain ATCC 14579 / DSM 31 / CCUG 7414 / JCM 2152 / NBRC 15305 / NCIMB 9373 / NCTC 2599 / NRRL B-3711) protein is Ribonuclease 3.